Consider the following 539-residue polypeptide: E3 ubiquitin-protein ligase arc-1 (539 aa).

The RING-type zinc-finger motif lies at 6-53; that stretch reads CNVCNEEYSARDPLKCPRVLTGCGHTICHNCAISIAGRNSSIFCPFDR. Residues 103–149 form a B box-type zinc finger; the sequence is LLNLECDEDSEHVAVIYCTVCDSNLCERCSESTHSTNVLSKHRRIPL. An ARF-like region spans residues 369 to 539; it reads ESRVVLLGLD…LSRLNGTCPV (171 aa). Residues 376-383, 422-426, and 481-484 each bind GTP; these read GLDGAGKT, DVGGL, and NRKD.

In the C-terminal section; belongs to the small GTPase superfamily. Arf family.

The catalysed reaction is S-ubiquitinyl-[E2 ubiquitin-conjugating enzyme]-L-cysteine + [acceptor protein]-L-lysine = [E2 ubiquitin-conjugating enzyme]-L-cysteine + N(6)-ubiquitinyl-[acceptor protein]-L-lysine.. It functions in the pathway protein modification; protein ubiquitination. Its function is as follows. Acts as an E3 ubiquitin-protein ligase. This Caenorhabditis elegans protein is E3 ubiquitin-protein ligase arc-1 (arc-1).